Here is a 388-residue protein sequence, read N- to C-terminus: Coproporphyrin III ferrochelatase (388 aa).

Serine 59 and tyrosine 124 together coordinate Fe-coproporphyrin III. 2 residues coordinate Fe(2+): histidine 186 and glutamate 276. Positions 349–369 (QSPQHASRAVTDAAATGRRGD) are disordered.

Belongs to the ferrochelatase family.

Its subcellular location is the cytoplasm. It catalyses the reaction Fe-coproporphyrin III + 2 H(+) = coproporphyrin III + Fe(2+). Its pathway is porphyrin-containing compound metabolism; protoheme biosynthesis. Involved in coproporphyrin-dependent heme b biosynthesis. Catalyzes the insertion of ferrous iron into coproporphyrin III to form Fe-coproporphyrin III. This Frankia alni (strain DSM 45986 / CECT 9034 / ACN14a) protein is Coproporphyrin III ferrochelatase.